The chain runs to 333 residues: tRNA (guanine(37)-N(1))/4-demethylwyosine(37)-methyltransferase Taw22 (333 aa).

Residues Arg-174, Phe-191, 213 to 214 (EI), and 243 to 244 (DV) contribute to the S-adenosyl-L-methionine site.

The protein belongs to the class I-like SAM-binding methyltransferase superfamily. TRM5/TYW2 family.

The protein resides in the cytoplasm. It carries out the reaction guanosine(37) in tRNA + S-adenosyl-L-methionine = N(1)-methylguanosine(37) in tRNA + S-adenosyl-L-homocysteine + H(+). It catalyses the reaction 4-demethylwyosine(37) in tRNA(Phe) + S-adenosyl-L-methionine = isowyosine(37) in tRNA(Phe) + S-adenosyl-L-homocysteine + H(+). Functionally, catalyzes both the N1-methylation of guanosine and the C7-methylation of 4-demethylwyosine (imG-14) at position 37 in tRNA(Phe). This Pyrococcus abyssi (strain GE5 / Orsay) protein is tRNA (guanine(37)-N(1))/4-demethylwyosine(37)-methyltransferase Taw22.